Here is a 93-residue protein sequence, read N- to C-terminus: HIG1 domain family member 1A, mitochondrial (93 aa).

Ser2 carries the post-translational modification N-acetylserine. Residues 2 to 93 (STNTDLSLSS…YQEFWAKRKP (92 aa)) enclose the HIG1 domain. Ser8 carries the phosphoserine modification. Helical transmembrane passes span 28–48 (PFVPIGMAGFAAIVAYGLYKL) and 69–89 (GFVVGAMTLGMGYSMYQEFWA). Over 90 to 93 (KRKP) the chain is Mitochondrial matrix.

Associates with cytochrome c oxidase (COX, complex IV); proposed complex component. Also associates with respiratory chain supercomplexes. Expressed in brain and spinal cord.

The protein localises to the mitochondrion membrane. It localises to the mitochondrion inner membrane. Functionally, proposed subunit of cytochrome c oxidase (COX, complex IV), which is the terminal component of the mitochondrial respiratory chain that catalyzes the reduction of oxygen to water. May play a role in the assembly of respiratory supercomplexes. In Rattus norvegicus (Rat), this protein is HIG1 domain family member 1A, mitochondrial (Higd1a).